A 529-amino-acid polypeptide reads, in one-letter code: Type I restriction enzyme StySPI methylase subunit (529 aa).

S-adenosyl-L-methionine is bound by residues 148–153, 178–180, and Glu-216; these read QYFTPR and TAG. The interval 424–443 is disordered; that stretch reads AEESEVADSEENKNADQHQA.

This sequence belongs to the N(4)/N(6)-methyltransferase family. The type I restriction/modification system is composed of three polypeptides R, M and S; the restriction enzyme has stoichiometry R(2)M(2)S(1) while the methyltransferase is M(2)S(1).

The catalysed reaction is a 2'-deoxyadenosine in DNA + S-adenosyl-L-methionine = an N(6)-methyl-2'-deoxyadenosine in DNA + S-adenosyl-L-homocysteine + H(+). Functionally, the subtype gamma methyltransferase (M) subunit of a type I restriction enzyme. The M and S subunits together form a methyltransferase (MTase) that methylates A-2 on the top strand and A-3 on the bottom strand of the sequence 5'-AACN(6)GTRC-3'. In the presence of the R subunit the complex can also act as an endonuclease, binding to the same target sequence but cutting the DNA some distance from this site. Whether the DNA is cut or modified depends on the methylation state of the target sequence. When the target site is unmodified, the DNA is cut. When the target site is hemimethylated, the complex acts as a maintenance MTase modifying the DNA so that both strands become methylated. After locating a non-methylated recognition site, the enzyme complex serves as a molecular motor that translocates DNA in an ATP-dependent manner until a collision occurs that triggers cleavage. The polypeptide is Type I restriction enzyme StySPI methylase subunit (Salmonella potsdam).